A 465-amino-acid polypeptide reads, in one-letter code: MPPCYPFLLSWEGWARDPPGRPGGAMRAHIITYGCQMNEYDSHLVASELVSLGWELVDSVEEADFVLVNTCAVRGKPVEKVRSLLGQLRKEKERRGLLIGMMGCLAQLDEGQQMAKKFGVDVLLGPGALTSLPEALKANERFFDLTFREDVLDYIPPPPKGALSAHVTIIRGCNHHCTYCIVPTTRGPEVSRHPDLILKEIELLKQAGVVEVTLLGQNVNSYGKDQPGFPSFAELLRMVGGMGIPRVRFLTSHPVNFTDDIIEAIAETPAICRYIHLPVQSGSDRVLRRMAREYRRAHYLERIRKIREALPDAVLSTDIIVGFPGETEEDFQETLSLYDEVGYDQAYMFIYSPRPGTPAYKHFQDLPREVKVERLMRLIEKQKEWSYRRNLEWVGKTVEVLVRGEAKEEGFVQGHDRGNHPVLVPASQAPVPGLYQVEIKQATPHLLFGEVVGAEAPAPIPLPVA.

The MTTase N-terminal domain occupies 26 to 141 (MRAHIITYGC…LPEALKANER (116 aa)). Residues Cys35, Cys71, Cys104, Cys173, Cys177, and Cys180 each coordinate [4Fe-4S] cluster. Residues 159–388 (PKGALSAHVT…IEKQKEWSYR (230 aa)) enclose the Radical SAM core domain. Residues 391 to 453 (LEWVGKTVEV…PHLLFGEVVG (63 aa)) form the TRAM domain.

The protein belongs to the methylthiotransferase family. MiaB subfamily. As to quaternary structure, monomer. [4Fe-4S] cluster serves as cofactor.

Its subcellular location is the cytoplasm. It carries out the reaction N(6)-dimethylallyladenosine(37) in tRNA + (sulfur carrier)-SH + AH2 + 2 S-adenosyl-L-methionine = 2-methylsulfanyl-N(6)-dimethylallyladenosine(37) in tRNA + (sulfur carrier)-H + 5'-deoxyadenosine + L-methionine + A + S-adenosyl-L-homocysteine + 2 H(+). In terms of biological role, catalyzes the methylthiolation of N6-(dimethylallyl)adenosine (i(6)A), leading to the formation of 2-methylthio-N6-(dimethylallyl)adenosine (ms(2)i(6)A) at position 37 in tRNAs that read codons beginning with uridine. The polypeptide is tRNA-2-methylthio-N(6)-dimethylallyladenosine synthase (Thermus thermophilus (strain ATCC BAA-163 / DSM 7039 / HB27)).